A 56-amino-acid chain; its full sequence is Protein SspF (56 aa).

This sequence belongs to the alpha/beta-type SASP family.

Functionally, may play some important role in either sporulation or the dormant spore. The sequence is that of Protein SspF (sspF) from Priestia megaterium (strain ATCC 12872 / QMB1551) (Bacillus megaterium).